Reading from the N-terminus, the 248-residue chain is 3-deoxy-manno-octulosonate cytidylyltransferase (248 aa).

This sequence belongs to the KdsB family.

Its subcellular location is the cytoplasm. The enzyme catalyses 3-deoxy-alpha-D-manno-oct-2-ulosonate + CTP = CMP-3-deoxy-beta-D-manno-octulosonate + diphosphate. The protein operates within nucleotide-sugar biosynthesis; CMP-3-deoxy-D-manno-octulosonate biosynthesis; CMP-3-deoxy-D-manno-octulosonate from 3-deoxy-D-manno-octulosonate and CTP: step 1/1. It functions in the pathway bacterial outer membrane biogenesis; lipopolysaccharide biosynthesis. Functionally, activates KDO (a required 8-carbon sugar) for incorporation into bacterial lipopolysaccharide in Gram-negative bacteria. The sequence is that of 3-deoxy-manno-octulosonate cytidylyltransferase from Escherichia coli O139:H28 (strain E24377A / ETEC).